The chain runs to 96 residues: UPF0235 protein VIBHAR_03581 (96 aa).

This sequence belongs to the UPF0235 family.

This chain is UPF0235 protein VIBHAR_03581, found in Vibrio campbellii (strain ATCC BAA-1116).